The chain runs to 858 residues: DNA mismatch repair protein MutS (858 aa).

An ATP-binding site is contributed by 600–607 (GPNMSGKS). The segment at 803 to 823 (EAASDEVDDNNSENSPMTDAE) is disordered.

Belongs to the DNA mismatch repair MutS family.

This protein is involved in the repair of mismatches in DNA. It is possible that it carries out the mismatch recognition step. This protein has a weak ATPase activity. The protein is DNA mismatch repair protein MutS of Lactobacillus helveticus (strain DPC 4571).